A 526-amino-acid polypeptide reads, in one-letter code: Glucose-6-phosphate isomerase (526 aa).

Glutamate 323 serves as the catalytic Proton donor. Active-site residues include histidine 352 and lysine 454.

It belongs to the GPI family.

It localises to the cytoplasm. The enzyme catalyses alpha-D-glucose 6-phosphate = beta-D-fructose 6-phosphate. It functions in the pathway carbohydrate biosynthesis; gluconeogenesis. The protein operates within carbohydrate degradation; glycolysis; D-glyceraldehyde 3-phosphate and glycerone phosphate from D-glucose: step 2/4. Catalyzes the reversible isomerization of glucose-6-phosphate to fructose-6-phosphate. The polypeptide is Glucose-6-phosphate isomerase (Prochlorococcus marinus subsp. pastoris (strain CCMP1986 / NIES-2087 / MED4)).